Consider the following 118-residue polypeptide: Large ribosomal subunit protein bL21c (118 aa).

This sequence belongs to the bacterial ribosomal protein bL21 family. Part of the 50S ribosomal subunit.

The protein localises to the plastid. Its subcellular location is the chloroplast. Functionally, this protein binds to 23S rRNA. In Psilotum nudum (Whisk fern), this protein is Large ribosomal subunit protein bL21c.